We begin with the raw amino-acid sequence, 408 residues long: Succinylornithine transaminase (408 aa).

Lys252 bears the N6-(pyridoxal phosphate)lysine mark.

It belongs to the class-III pyridoxal-phosphate-dependent aminotransferase family. AstC subfamily. Requires pyridoxal 5'-phosphate as cofactor.

The catalysed reaction is N(2)-succinyl-L-ornithine + 2-oxoglutarate = N-succinyl-L-glutamate 5-semialdehyde + L-glutamate. It participates in amino-acid degradation; L-arginine degradation via AST pathway; L-glutamate and succinate from L-arginine: step 3/5. Functionally, catalyzes the transamination of N(2)-succinylornithine and alpha-ketoglutarate into N(2)-succinylglutamate semialdehyde and glutamate. Can also act as an acetylornithine aminotransferase. The polypeptide is Succinylornithine transaminase (Salmonella typhimurium (strain LT2 / SGSC1412 / ATCC 700720)).